The following is a 278-amino-acid chain: Envelope glycoprotein L (278 aa).

The signal sequence occupies residues 1-30 (MCRRPDCGFSFSPGPVILLWCCLLLPIVSS). The region spanning 43–256 (VPAECPELTR…DKYYAGLPPE (214 aa)) is the gL betaherpesvirus-type domain. An intrachain disulfide couples C154 to C159.

It belongs to the herpesviridae glycoprotein L (gL) family. Betaherpesvirinae gL subfamily. In terms of assembly, interacts with glycoprotein H (gH); this interaction is necessary for the correct processing and cell surface expression of gH. Forms the envelope pentamer complex (PC) composed of gH, gL, UL128, UL130, and UL131A. The pentamer interacts with host NRP2. Forms the envelope trimer complex composed of gH, gL, and gO. The trimer interacts with host PDGFRA. The trimer also interacts with host EPHA2.

It is found in the virion membrane. Its subcellular location is the host cell membrane. The protein resides in the host Golgi apparatus. It localises to the host trans-Golgi network. Functionally, the heterodimer glycoprotein H-glycoprotein L is required for the fusion of viral and plasma membranes leading to virus entry into the host cell. Acts as a functional inhibitor of gH and maintains gH in an inhibited form. Upon binding to host integrins, gL dissociates from gH leading to activation of the viral fusion glycoproteins gB and gH. In human cytomegalovirus, forms two distincts complexes to mediate viral entry, a trimer and a pentamer at the surface of the virion envelope. The gH-gL-gO trimer is required for infection in fibroblasts by interacting with host PDGFRA, and in glioblastoma cells by interacting with host EPHA2. The gH-gL-UL128-UL130-UL131A pentamer is essential for viral entry in epithelial, endothelial and myeloid cells via interaction with host NRP2. This Human cytomegalovirus (strain 5160) (HHV-5) protein is Envelope glycoprotein L.